Reading from the N-terminus, the 351-residue chain is Uroporphyrinogen decarboxylase (351 aa).

Substrate is bound by residues 25–29 (RQAGR), Asp74, Tyr151, Ser206, and His325.

The protein belongs to the uroporphyrinogen decarboxylase family. Homodimer.

Its subcellular location is the cytoplasm. It catalyses the reaction uroporphyrinogen III + 4 H(+) = coproporphyrinogen III + 4 CO2. The protein operates within porphyrin-containing compound metabolism; protoporphyrin-IX biosynthesis; coproporphyrinogen-III from 5-aminolevulinate: step 4/4. Catalyzes the decarboxylation of four acetate groups of uroporphyrinogen-III to yield coproporphyrinogen-III. This Chlorobium luteolum (strain DSM 273 / BCRC 81028 / 2530) (Pelodictyon luteolum) protein is Uroporphyrinogen decarboxylase.